The chain runs to 419 residues: Histidine--tRNA ligase (419 aa).

This sequence belongs to the class-II aminoacyl-tRNA synthetase family.

The protein localises to the cytoplasm. The catalysed reaction is tRNA(His) + L-histidine + ATP = L-histidyl-tRNA(His) + AMP + diphosphate + H(+). The sequence is that of Histidine--tRNA ligase from Pyrobaculum aerophilum (strain ATCC 51768 / DSM 7523 / JCM 9630 / CIP 104966 / NBRC 100827 / IM2).